A 213-amino-acid chain; its full sequence is Imidazoleglycerol-phosphate dehydratase (213 aa).

The protein belongs to the imidazoleglycerol-phosphate dehydratase family.

The protein resides in the cytoplasm. It carries out the reaction D-erythro-1-(imidazol-4-yl)glycerol 3-phosphate = 3-(imidazol-4-yl)-2-oxopropyl phosphate + H2O. The protein operates within amino-acid biosynthesis; L-histidine biosynthesis; L-histidine from 5-phospho-alpha-D-ribose 1-diphosphate: step 6/9. The polypeptide is Imidazoleglycerol-phosphate dehydratase (Trichodesmium erythraeum (strain IMS101)).